Consider the following 292-residue polypeptide: Nucleophosmin (292 aa).

M1 carries the N-acetylmethionine modification. A necessary for interaction with APEX1 region spans residues 1–117 (MEDSMDMDMS…PVHISGQHLV (117 aa)). The segment at 1–185 (MEDSMDMDMS…DDDDFDEEET (185 aa)) is required for interaction with SENP3. S4 carries the phosphoserine; by PLK1 and PLK2 modification. Residue S10 is modified to Phosphoserine. A Glycyl lysine isopeptide (Lys-Gly) (interchain with G-Cter in SUMO2) cross-link involves residue K27. K32 carries the N6-acetyllysine; alternate modification. K32 participates in a covalent cross-link: Glycyl lysine isopeptide (Lys-Gly) (interchain with G-Cter in SUMO1); alternate. K32 is covalently cross-linked (Glycyl lysine isopeptide (Lys-Gly) (interchain with G-Cter in SUMO2); alternate). S43 bears the Phosphoserine mark. Y67 carries the post-translational modification Phosphotyrosine. S70 carries the post-translational modification Phosphoserine. A phosphothreonine mark is found at T75 and T95. A phosphoserine mark is found at S125 and S139. Residues 138 to 248 (MSGKRSAPGG…PSSVEDIKAK (111 aa)) form a disordered region. K141 is covalently cross-linked (Glycyl lysine isopeptide (Lys-Gly) (interchain with G-Cter in SUMO2)). An N6-acetyllysine; alternate modification is found at K150. A Glycyl lysine isopeptide (Lys-Gly) (interchain with G-Cter in SUMO2); alternate cross-link involves residue K150. The Nuclear localization signal motif lies at 152 to 157 (PQKKVK). The residue at position 154 (K154) is an N6-acetyllysine. A compositionally biased stretch (acidic residues) spans 159-186 (DEDDEDDDEDDEDDEDDDDDDFDEEETE). The interaction with NOP2 stretch occupies residues 186–214 (EEKVPVKKSVRDTPAKNAQKSNQNGKDLK). Over residues 187 to 199 (EKVPVKKSVRDTP) the composition is skewed to basic and acidic residues. The short motif at 190–196 (PVKKSVR) is the Nuclear localization signal element. A Phosphothreonine; by CDK1 and CDK2 modification is found at T198. The segment covering 201 to 210 (KNAQKSNQNG) has biased composition (polar residues). S206 is subject to ADP-ribosylserine. Residue K211 is modified to N6-acetyllysine. K214 participates in a covalent cross-link: Glycyl lysine isopeptide (Lys-Gly) (interchain with G-Cter in SUMO2). T217 carries the post-translational modification Phosphothreonine; by CDK1. Over residues 221 to 233 (KGQESFKKQEKTP) the composition is skewed to basic and acidic residues. S225 is subject to Phosphoserine. At K227 the chain carries N6-acetyllysine. An N6-acetyllysine; alternate modification is found at K228. A Glycyl lysine isopeptide (Lys-Gly) (interchain with G-Cter in SUMO); alternate cross-link involves residue K228. A phosphothreonine; by CDK1 mark is found at T232 and T235. S240 and S241 each carry phosphoserine. Residues 241 to 292 (SVEDIKAKMQASIEKGGSLPKVEAKFINYVKNCFRMTDQEAIQDLWQWRKSL) form a required for nucleolar localization region. K246 is covalently cross-linked (Glycyl lysine isopeptide (Lys-Gly) (interchain with G-Cter in SUMO1); alternate). Glycyl lysine isopeptide (Lys-Gly) (interchain with G-Cter in SUMO2); alternate cross-links involve residues K246 and K248. At K248 the chain carries N6-acetyllysine; alternate. Position 252 is a phosphoserine (S252). At K255 the chain carries N6-acetyllysine; alternate. A Glycyl lysine isopeptide (Lys-Gly) (interchain with G-Cter in SUMO1); alternate cross-link involves residue K255. Residue K255 forms a Glycyl lysine isopeptide (Lys-Gly) (interchain with G-Cter in SUMO2); alternate linkage. Phosphoserine is present on S258. Residues K261, K265, and K271 each participate in a glycyl lysine isopeptide (Lys-Gly) (interchain with G-Cter in SUMO2); alternate cross-link. K261 is covalently cross-linked (Glycyl lysine isopeptide (Lys-Gly) (interchain with G-Cter in SUMO); alternate). N6-acetyllysine; alternate occurs at positions 265 and 271. Residue K265 forms a Glycyl lysine isopeptide (Lys-Gly) (interchain with G-Cter in SUMO1); alternate linkage. K265 is modified (N6-succinyllysine; alternate). T277 is subject to Phosphothreonine. The residue at position 290 (K290) is an N6-acetyllysine.

It belongs to the nucleoplasmin family. In terms of assembly, decamer formed by two pentameric rings associated in a head-to-head fashion. Disulfide-linked dimers under certain conditions. Interacts with NSUN2 and SENP3. The SWAP complex consists of NPM1, NCL, PARP1 and SWAP70. Interacts with the methylated form of RPS10. Interacts (via N-terminal domain) with APEX1; the interaction is RNA-dependent and decreases peroxide-damaged cells. Interacts with NEK2. Interacts with ROCK2 and BRCA2. Interacts with RPGR. Interacts with CENPW. Interacts with EIF2AK2/PKR. Interacts with DDX31; this interaction prevents interaction between NPM1 and HDM2. Interacts with MYC; competitive with NOP53. Interacts with NOP53; the interaction is direct and competitive with MYC. Interacts with LRRC34. Interacts with RRP1B. Interacts with NPM3. Interacts with ALKBH2. Interacts with TTF1 (via C-terminal region). Interacts with NOP2. Interacts with ARID3C (via REKLES DOMAIN); the interaction mediates ARID3C nuclear shuttling. In terms of processing, acetylated at C-terminal lysine residues, thereby increasing affinity to histones. Post-translationally, ADP-ribosylated. Phosphorylated at Ser-4 by PLK1 and PLK2. Phosphorylation at Ser-4 by PLK2 in S phase is required for centriole duplication and is sufficient to trigger centriole replication. Phosphorylation at Ser-4 by PLK1 takes place during mitosis. Phosphorylated by CDK2 at Ser-125 and Thr-198. Phosphorylation at Thr-198 may trigger initiation of centrosome duplication. Phosphorylated by CDK1 at Thr-198, Thr-217, Thr-232 and Thr-235 during cell mitosis. When these four sites are phosphorated, RNA-binding activity seem to be abolished. May be phosphorylated at Ser-70 by NEK2. The Thr-198 phosphorylated form has higher affinity for ROCK2. In terms of processing, sumoylated by ARF. Post-translationally, ubiquitinated. Ubiquitination leads to proteasomal degradation. Deubiquitinated by USP36. In terms of tissue distribution, expressed in B-cells that have been induced to switch to various Ig isotypes.

The protein resides in the nucleus. It localises to the nucleolus. Its subcellular location is the nucleoplasm. The protein localises to the cytoplasm. It is found in the cytoskeleton. The protein resides in the microtubule organizing center. It localises to the centrosome. Involved in diverse cellular processes such as ribosome biogenesis, centrosome duplication, protein chaperoning, histone assembly, cell proliferation, and regulation of tumor suppressors p53/TP53 and ARF. Binds ribosome presumably to drive ribosome nuclear export. Associated with nucleolar ribonucleoprotein structures and bind single-stranded nucleic acids. Acts as a chaperonin for the core histones H3, H2B and H4. Stimulates APEX1 endonuclease activity on apurinic/apyrimidinic (AP) double-stranded DNA but inhibits APEX1 endonuclease activity on AP single-stranded RNA. May exert a control of APEX1 endonuclease activity within nucleoli devoted to repair AP on rDNA and the removal of oxidized rRNA molecules. In concert with BRCA2, regulates centrosome duplication. Regulates centriole duplication: phosphorylation by PLK2 is able to trigger centriole replication. Negatively regulates the activation of EIF2AK2/PKR and suppresses apoptosis through inhibition of EIF2AK2/PKR autophosphorylation. Antagonizes the inhibitory effect of ATF5 on cell proliferation and relieves ATF5-induced G2/M blockade. In complex with MYC enhances the transcription of MYC target genes. May act as chaperonin or cotransporter in the nucleolar localization of transcription termination factor TTF1. This chain is Nucleophosmin (Npm1), found in Mus musculus (Mouse).